Consider the following 157-residue polypeptide: 6,7-dimethyl-8-ribityllumazine synthase (157 aa).

Residues phenylalanine 26, 60 to 62 (ALE), and 86 to 88 (AVI) contribute to the 5-amino-6-(D-ribitylamino)uracil site. 91 to 92 (ET) serves as a coordination point for (2S)-2-hydroxy-3-oxobutyl phosphate. Histidine 94 acts as the Proton donor in catalysis. A 5-amino-6-(D-ribitylamino)uracil-binding site is contributed by asparagine 119. Arginine 133 serves as a coordination point for (2S)-2-hydroxy-3-oxobutyl phosphate.

This sequence belongs to the DMRL synthase family.

The catalysed reaction is (2S)-2-hydroxy-3-oxobutyl phosphate + 5-amino-6-(D-ribitylamino)uracil = 6,7-dimethyl-8-(1-D-ribityl)lumazine + phosphate + 2 H2O + H(+). It participates in cofactor biosynthesis; riboflavin biosynthesis; riboflavin from 2-hydroxy-3-oxobutyl phosphate and 5-amino-6-(D-ribitylamino)uracil: step 1/2. In terms of biological role, catalyzes the formation of 6,7-dimethyl-8-ribityllumazine by condensation of 5-amino-6-(D-ribitylamino)uracil with 3,4-dihydroxy-2-butanone 4-phosphate. This is the penultimate step in the biosynthesis of riboflavin. The polypeptide is 6,7-dimethyl-8-ribityllumazine synthase (Laribacter hongkongensis (strain HLHK9)).